A 4960-amino-acid chain; its full sequence is Malformin synthetase mlfA (4960 aa).

Residues 194–564 (ERHATNRPHS…CGRADTQVKL (371 aa)) are adenylation 1. A Carrier 1 domain is found at 705-778 (SRLEQEVQLA…EAASLAEVQE (74 aa)). Residue Ser739 is modified to O-(pantetheine 4'-phosphoryl)serine. Positions 816-1247 (EDVFPCTTMQ…ALNTLSLLQA (432 aa)) are condensation 1. Residues 1275 to 1650 (DRWVTRQPEG…GRKDTQVKLR (376 aa)) are adenylation 2. The 78-residue stretch at 1777-1854 (TPASELERTL…HLAAEVGEPA (78 aa)) folds into the Carrier 2 domain. Disordered stretches follow at residues 1855-1883 (GQSASSASSTTEEGFTFSTPDDSSTNDGV) and 1917-1943 (GGSSSNKTPSVSSSSSSSSSSKRKKNA). Low complexity-rich tracts occupy residues 1857–1881 (SASSASSTTEEGFTFSTPDDSSTND) and 1919–1936 (SSSNKTPSVSSSSSSSSS). The tract at residues 1989 to 2404 (EDIYPATALQ…AVSCSDKETL (416 aa)) is condensation 2. The tract at residues 2427–2819 (RRTPHAPAVC…IGRRDGQLKL (393 aa)) is adenylation 3. The Carrier 3 domain maps to 2955–3031 (RPVTSQEREM…QLICHINTIR (77 aa)). Position 2992 is an O-(pantetheine 4'-phosphoryl)serine (Ser2992). Condensation regions lie at residues 3049 to 3464 (VALA…FTFP) and 3520 to 3889 (SGYV…EQLV). Residues 3914 to 4304 (HNSRQAVCAW…VGRKDNQIKF (391 aa)) are adenylation 4. One can recognise a Carrier 4 domain in the interval 4438–4514 (MPSTAAERKM…DLSDQAKSLI (77 aa)). Ser4475 carries the O-(pantetheine 4'-phosphoryl)serine modification. The tract at residues 4551-4878 (DVLPTTSFQH…LQTIVQHQNN (328 aa)) is condensation 5.

It belongs to the NRP synthetase family.

It functions in the pathway secondary metabolite biosynthesis. In terms of biological role, nonribosomal peptide synthetase; part of the gene cluster that mediates the biosynthesis of malformins, cyclic pentapeptides with a disulfide bond between 2 consecutive cysteins, that show potential anti-tumor as well as antimalarial and antitrypanosomal properties. The nonribosomal peptide synthetase mlfA is responsible of the formation of the cyclic pentapeptide. The malformin biosynthesis clusters in malformin-producing fungi also contain enzymes involved in the formation of the disulfide bond between the two consecutive cysteins within malformins, in addition to additional tailoring enzymes such as methyltransferases or oxidoreductases. They are also composed of up to 4 major facilitator superfamily transporters, and transcription factors probably involved in the regulation of the expression of those clusters. The polypeptide is Malformin synthetase mlfA (Aspergillus neoniger (strain CBS 115656)).